Reading from the N-terminus, the 565-residue chain is Oxygen-dependent choline dehydrogenase (565 aa).

Residue 6-35 (DYIIVGAGSAGNTLATRLTEDAGVTVLLLE) participates in FAD binding. Residues 182–201 (QQEGFGPMDRTVTKNGRRSS) are disordered. His-475 functions as the Proton acceptor in the catalytic mechanism.

Belongs to the GMC oxidoreductase family. Requires FAD as cofactor.

The catalysed reaction is choline + A = betaine aldehyde + AH2. It catalyses the reaction betaine aldehyde + NAD(+) + H2O = glycine betaine + NADH + 2 H(+). It participates in amine and polyamine biosynthesis; betaine biosynthesis via choline pathway; betaine aldehyde from choline (cytochrome c reductase route): step 1/1. Involved in the biosynthesis of the osmoprotectant glycine betaine. Catalyzes the oxidation of choline to betaine aldehyde and betaine aldehyde to glycine betaine at the same rate. The polypeptide is Oxygen-dependent choline dehydrogenase (Pseudomonas putida (strain ATCC 47054 / DSM 6125 / CFBP 8728 / NCIMB 11950 / KT2440)).